We begin with the raw amino-acid sequence, 1693 residues long: Serine protease filzig (1693 aa).

At 1 to 47 (MFKWVTPASTATLSRCTLPATTAATTTTTAMAATRTATTTTRTTRPQ) the chain is on the cytoplasmic side. Residues 48-68 (LLSIALTSLIIIVASFVPTTS) form a helical; Signal-anchor for type II membrane protein membrane-spanning segment. Residues 69–1693 (GFRSIETNGG…PWLRSITGVK (1625 aa)) lie on the Extracellular side of the membrane. Disordered regions lie at residues 170-198 (QQSA…QQPS), 212-321 (QQLD…NDDF), 352-465 (GLQD…THPG), and 477-524 (STGY…TTVS). 2 stretches are compositionally biased toward polar residues: residues 178-198 (FESY…QQPS) and 212-222 (QQLDSSSSISP). 2 stretches are compositionally biased toward low complexity: residues 230–241 (EPQQQEYQSESE) and 252–268 (TSSS…SSAS). The span at 274–294 (EPSQPADASNDQTTQKINKQP) shows a compositional bias: polar residues. Composition is skewed to low complexity over residues 358–404 (SSES…PTQK), 422–431 (QQKPQQVAKP), and 488–501 (EPPK…PAEQ). A compositionally biased stretch (polar residues) spans 502 to 524 (SYISSSTSAKRPTTGHNSPTTVS). Residues N541 and N582 are each glycosylated (N-linked (GlcNAc...) asparagine). Disordered regions lie at residues 615–635 (QDAS…PGYG), 752–1007 (HYNP…PPAT), and 1057–1090 (YAHR…TVLI). Over residues 771–799 (SVSSHTTKVQEQMDETSNGYQQSETTSGY) the composition is skewed to polar residues. The span at 836–847 (PRPKPSTKRPAV) shows a compositional bias: basic residues. Composition is skewed to polar residues over residues 951-962 (QYDQPSAPSASY) and 989-1000 (KPISTSYVTGPS). 2 N-linked (GlcNAc...) asparagine glycosylation sites follow: N1215 and N1272. 3 stretches are compositionally biased toward low complexity: residues 1297–1307 (PVRTATTTRPK), 1331–1353 (TTTR…TTRR), and 1362–1376 (RVSS…SSAR). Residues 1297–1435 (PVRTATTTRP…TPNLAFHSPS (139 aa)) form a disordered region. Positions 1380-1391 (DEIVDEEDEEDV) are enriched in acidic residues. A Peptidase S1 domain is found at 1449 to 1691 (IVGGKGSTFG…YKPWLRSITG (243 aa)). C1480 and C1496 are disulfide-bonded. Residues H1495 and D1544 each act as charge relay system in the active site. Intrachain disulfides connect C1608-C1627 and C1638-C1667. S1642 serves as the catalytic Charge relay system.

Belongs to the peptidase S1 family.

It localises to the cell membrane. Probable endopeptidase. In tracheal terminal cells, acts downstream of ich to regulate seamless tube growth and/or maintenance probably by processing lumenal matrix proteins. The protein is Serine protease filzig of Drosophila melanogaster (Fruit fly).